Reading from the N-terminus, the 83-residue chain is Probable calcium-binding protein CML29 (83 aa).

EF-hand domains lie at 5-40 and 43-75; these read TEKA…LGSV and DDVK…NRGL. Residues Asp18, Asn20, Asp22, Lys24, Glu29, Asp53, Asp55, Asp57, Asn59, and Glu64 each coordinate Ca(2+).

Potential calcium sensor. In Arabidopsis thaliana (Mouse-ear cress), this protein is Probable calcium-binding protein CML29 (CML29).